An 858-amino-acid chain; its full sequence is G2-specific protein kinase nim-1 (858 aa).

A Protein kinase domain is found at 7–290 (YELLEKIGHG…TATLLNLPIV (284 aa)). ATP-binding positions include 13–21 (IGHGSFGII) and K36. The Proton acceptor role is filled by D161. A Phosphothreonine; by autocatalysis modification is found at T194. The stretch at 291-383 (RLMRKEKEVV…QARVEAELQR (93 aa)) forms a coiled coil. Disordered regions lie at residues 495 to 693 (TKAP…LPQA) and 747 to 858 (SAVD…LSQS). Over residues 516 to 525 (SNWEVPRETE) the composition is skewed to basic and acidic residues. Acidic residues predominate over residues 526–535 (MIDSGDESEA). 2 stretches are compositionally biased toward polar residues: residues 548-572 (SSKNPFSTVTTRSRPSLNSQQNSNV) and 580-598 (SKQTLATRSKTVSGVSSIG). The segment covering 636 to 648 (SANNINNSSNGGS) has biased composition (low complexity). Positions 650–661 (APSSTVTSNITV) are enriched in polar residues. Residues 676-691 (SSFSQQQNNQPQQSLP) are compositionally biased toward low complexity. Residues 760–780 (GQSQLPTRPRSQPQPITANFE) show a composition bias toward polar residues. Low complexity predominate over residues 781-802 (QQQQQQQSNTNSISSSNSAGSG).

Belongs to the protein kinase superfamily. CAMK Ser/Thr protein kinase family.

The protein resides in the nucleus. The catalysed reaction is L-seryl-[protein] + ATP = O-phospho-L-seryl-[protein] + ADP + H(+). The enzyme catalyses L-threonyl-[protein] + ATP = O-phospho-L-threonyl-[protein] + ADP + H(+). Functionally, protein kinase that plays an important role in mitotic regulation. The protein is G2-specific protein kinase nim-1 (nim-1) of Neurospora crassa (strain ATCC 24698 / 74-OR23-1A / CBS 708.71 / DSM 1257 / FGSC 987).